The sequence spans 243 residues: Biosynthetic peptidoglycan transglycosylase (243 aa).

Residues Leu22 to Val42 traverse the membrane as a helical segment.

The protein belongs to the glycosyltransferase 51 family.

The protein localises to the cell inner membrane. The catalysed reaction is [GlcNAc-(1-&gt;4)-Mur2Ac(oyl-L-Ala-gamma-D-Glu-L-Lys-D-Ala-D-Ala)](n)-di-trans,octa-cis-undecaprenyl diphosphate + beta-D-GlcNAc-(1-&gt;4)-Mur2Ac(oyl-L-Ala-gamma-D-Glu-L-Lys-D-Ala-D-Ala)-di-trans,octa-cis-undecaprenyl diphosphate = [GlcNAc-(1-&gt;4)-Mur2Ac(oyl-L-Ala-gamma-D-Glu-L-Lys-D-Ala-D-Ala)](n+1)-di-trans,octa-cis-undecaprenyl diphosphate + di-trans,octa-cis-undecaprenyl diphosphate + H(+). It participates in cell wall biogenesis; peptidoglycan biosynthesis. Its function is as follows. Peptidoglycan polymerase that catalyzes glycan chain elongation from lipid-linked precursors. The chain is Biosynthetic peptidoglycan transglycosylase from Xylella fastidiosa (strain 9a5c).